We begin with the raw amino-acid sequence, 36 residues long: Photosystem I reaction center subunit VIII (36 aa).

The helical transmembrane segment at 5–27 threads the bilayer; it reads FLPSILVPLVGLVFPAIAIASLF.

Belongs to the PsaI family.

The protein resides in the plastid. It localises to the chloroplast thylakoid membrane. Functionally, may help in the organization of the PsaL subunit. This Chaetosphaeridium globosum (Charophycean green alga) protein is Photosystem I reaction center subunit VIII.